Here is a 188-residue protein sequence, read N- to C-terminus: Shikimate kinase (188 aa).

21-26 is an ATP binding site; the sequence is GAGKTT. Threonine 25 serves as a coordination point for Mg(2+). 3 residues coordinate substrate: aspartate 43, arginine 67, and glycine 90. Arginine 130 provides a ligand contact to ATP. A substrate-binding site is contributed by arginine 148.

It belongs to the shikimate kinase family. Monomer. Mg(2+) is required as a cofactor.

The protein resides in the cytoplasm. The catalysed reaction is shikimate + ATP = 3-phosphoshikimate + ADP + H(+). It functions in the pathway metabolic intermediate biosynthesis; chorismate biosynthesis; chorismate from D-erythrose 4-phosphate and phosphoenolpyruvate: step 5/7. In terms of biological role, catalyzes the specific phosphorylation of the 3-hydroxyl group of shikimic acid using ATP as a cosubstrate. This chain is Shikimate kinase, found in Geobacillus kaustophilus (strain HTA426).